A 904-amino-acid polypeptide reads, in one-letter code: Protein translocase subunit SecA (904 aa).

ATP contacts are provided by residues Gln-89, 107–111 (GEGKT), and Asp-502. Residues Cys-886, Cys-888, Cys-897, and His-898 each contribute to the Zn(2+) site.

Belongs to the SecA family. Monomer and homodimer. Part of the essential Sec protein translocation apparatus which comprises SecA, SecYEG and auxiliary proteins SecDF-YajC and YidC. It depends on Zn(2+) as a cofactor.

Its subcellular location is the cell inner membrane. It localises to the cytoplasm. It catalyses the reaction ATP + H2O + cellular proteinSide 1 = ADP + phosphate + cellular proteinSide 2.. Part of the Sec protein translocase complex. Interacts with the SecYEG preprotein conducting channel. Has a central role in coupling the hydrolysis of ATP to the transfer of proteins into and across the cell membrane, serving both as a receptor for the preprotein-SecB complex and as an ATP-driven molecular motor driving the stepwise translocation of polypeptide chains across the membrane. This is Protein translocase subunit SecA from Rhizobium etli (strain CIAT 652).